Here is a 501-residue protein sequence, read N- to C-terminus: ATP synthase subunit alpha (501 aa).

ATP is bound at residue 169 to 176; sequence GDRQTGKT.

This sequence belongs to the ATPase alpha/beta chains family. F-type ATPases have 2 components, CF(1) - the catalytic core - and CF(0) - the membrane proton channel. CF(1) has five subunits: alpha(3), beta(3), gamma(1), delta(1), epsilon(1). CF(0) has three main subunits: a(1), b(2) and c(9-12). The alpha and beta chains form an alternating ring which encloses part of the gamma chain. CF(1) is attached to CF(0) by a central stalk formed by the gamma and epsilon chains, while a peripheral stalk is formed by the delta and b chains.

The protein localises to the cell membrane. The enzyme catalyses ATP + H2O + 4 H(+)(in) = ADP + phosphate + 5 H(+)(out). In terms of biological role, produces ATP from ADP in the presence of a proton gradient across the membrane. The alpha chain is a regulatory subunit. The sequence is that of ATP synthase subunit alpha from Streptococcus pneumoniae (strain Hungary19A-6).